A 183-amino-acid chain; its full sequence is Guanylate kinase (183 aa).

One can recognise a Guanylate kinase-like domain in the interval 4–182 (GRVVVLTGPS…AITALEAAIF (179 aa)). Residue 11–18 (GPSGVGKG) coordinates ATP.

The protein belongs to the guanylate kinase family.

The protein localises to the cytoplasm. The enzyme catalyses GMP + ATP = GDP + ADP. It catalyses the reaction dZMP + ATP = dZDP + ADP. It functions in the pathway purine metabolism. Its function is as follows. Essential for recycling GMP and indirectly, cGMP. Functionally, (Microbial infection) Catalyzes the phosphorylation of dZMP to dZDP, when the bacterium is infected by a phage that produces the substrate for the synthesis of dZTP (2- amino-2'-deoxyadenosine 5'-triphosphate), which is then used by the phage as a DNA polymerase substrate. The polypeptide is Guanylate kinase (Synechococcus elongatus (strain ATCC 33912 / PCC 7942 / FACHB-805) (Anacystis nidulans R2)).